A 216-amino-acid polypeptide reads, in one-letter code: Transmembrane emp24 domain-containing protein eca (216 aa).

A signal peptide spans 1–20 (MRNQFICVALLLCALNSACG). The Lumenal segment spans residues 21 to 183 (LYFHISETER…RHTSESTNSR (163 aa)). A GOLD domain is found at 30–126 (RKCFIEEVPD…QLRVHLDIQV (97 aa)). The stretch at 134–164 (ANVAQKEKLTELQLRIRQLLDQVDQITKEQN) forms a coiled coil. Residues 184–203 (VLWWSLAQTVVLVCMGFWQM) traverse the membrane as a helical segment. The Cytoplasmic portion of the chain corresponds to 204 to 216 (RHLKSFFEAKKLV). The short motif at 213–216 (KKLV) is the Prevents secretion from ER element.

The protein belongs to the EMP24/GP25L family.

The protein localises to the endoplasmic reticulum membrane. In terms of biological role, eca and bai are essential, though not redundant, for dorsoventral patterning of the embryo. Specifically required during early embryogenesis for the activity of maternal tkv, while the zygotic tkv is not affected. Involved in Golgi organization. This is Transmembrane emp24 domain-containing protein eca from Drosophila willistoni (Fruit fly).